The sequence spans 316 residues: tRNA-splicing endonuclease subunit Sen34 (316 aa).

Positions 120–184 (QAAKKQKLEQ…PGPSNGVTPL (65 aa)) are disordered. Composition is skewed to polar residues over residues 144–159 (EATQ…QPSA) and 168–181 (LDSS…SNGV). Catalysis depends on residues Tyr-253, His-261, and Lys-292.

It belongs to the tRNA-intron endonuclease family. In terms of assembly, tRNA splicing endonuclease is a heterotetramer composed of TSEN2, TSEN15, TSEN34/LENG5 and TSEN54. tRNA splicing endonuclease complex also contains proteins of the pre-mRNA 3'-end processing machinery such as CLP1, CPSF1, CPSF4 and CSTF2.

The protein resides in the nucleus. Its subcellular location is the nucleolus. The enzyme catalyses pretRNA = a 3'-half-tRNA molecule with a 5'-OH end + a 5'-half-tRNA molecule with a 2',3'-cyclic phosphate end + an intron with a 2',3'-cyclic phosphate and a 5'-hydroxyl terminus.. Functionally, constitutes one of the two catalytic subunit of the tRNA-splicing endonuclease complex, a complex responsible for identification and cleavage of the splice sites in pre-tRNA. It cleaves pre-tRNA at the 5'- and 3'-splice sites to release the intron. The products are an intron and two tRNA half-molecules bearing 2',3'-cyclic phosphate and 5'-OH termini. There are no conserved sequences at the splice sites, but the intron is invariably located at the same site in the gene, placing the splice sites an invariant distance from the constant structural features of the tRNA body. The tRNA splicing endonuclease is also involved in mRNA processing via its association with pre-mRNA 3'-end processing factors, establishing a link between pre-tRNA splicing and pre-mRNA 3'-end formation, suggesting that the endonuclease subunits function in multiple RNA-processing events. The chain is tRNA-splicing endonuclease subunit Sen34 (Tsen34) from Mus musculus (Mouse).